A 108-amino-acid chain; its full sequence is Glutaredoxin 4 (108 aa).

The region spanning 5–107 (IKKIQNQIQN…KTISICDKLN (103 aa)) is the Glutaredoxin domain. Lys-22 serves as a coordination point for glutathione. Cys-30 lines the [2Fe-2S] cluster pocket. Glutathione-binding positions include Arg-59, Phe-71, and 84-85 (CN).

Belongs to the glutaredoxin family. Monothiol subfamily. Homodimer.

Its subcellular location is the cytoplasm. Its function is as follows. Monothiol glutaredoxin involved in the biogenesis of iron-sulfur clusters. In Buchnera aphidicola subsp. Baizongia pistaciae (strain Bp), this protein is Glutaredoxin 4 (grxD).